The chain runs to 331 residues: Phosphoribosylformylglycinamidine cyclo-ligase (331 aa).

Belongs to the AIR synthase family.

It is found in the cytoplasm. The enzyme catalyses 2-formamido-N(1)-(5-O-phospho-beta-D-ribosyl)acetamidine + ATP = 5-amino-1-(5-phospho-beta-D-ribosyl)imidazole + ADP + phosphate + H(+). It functions in the pathway purine metabolism; IMP biosynthesis via de novo pathway; 5-amino-1-(5-phospho-D-ribosyl)imidazole from N(2)-formyl-N(1)-(5-phospho-D-ribosyl)glycinamide: step 2/2. In Clostridium kluyveri (strain NBRC 12016), this protein is Phosphoribosylformylglycinamidine cyclo-ligase.